The following is a 430-amino-acid chain: MLDPKCLRSDIEQTAKRLAARGFNLDVAAFSSLEEKRKTLQSRTQDLQNERNVRSKSIGKAKAQGEDIAPLLAEVGKLGDELDAAKAELSELLEEINTLTQGIPNLPHESVPEGKDEDDNVEISRWGEPRTFDFEVKDHVDVAEGLNNGLDFATASKLTGSRFVVMRGDIARLNRALAQFMLDTHTQEHGYQEMYVPYLVNADSLYGTGQLPKFGEDLFHTKPATEEGQGLSLIPTAEVPLTNIARDEILDAKTLPVKMTAHTPCFRSEAGSYGRDTRGLIRQHQFDKVELVQLVKPEDSFDALEALTGHAEVILQKLELPYRKVLLCTGDMGFGACKTYDLEVWLPAQNTYREISSCSNMLDFQARRMQARFRNPETNKPELLHTLNGSGLAVGRTLVAILENNQQADGSVTVPKALVPYMAGQEVIKA.

The segment at 41–60 (QSRTQDLQNERNVRSKSIGK) is disordered. L-serine is bound at residue 236–238 (TAE). 267–269 (RSE) provides a ligand contact to ATP. Glu290 serves as a coordination point for L-serine. 354-357 (EISS) serves as a coordination point for ATP. Ser390 contacts L-serine.

It belongs to the class-II aminoacyl-tRNA synthetase family. Type-1 seryl-tRNA synthetase subfamily. In terms of assembly, homodimer. The tRNA molecule binds across the dimer.

Its subcellular location is the cytoplasm. It carries out the reaction tRNA(Ser) + L-serine + ATP = L-seryl-tRNA(Ser) + AMP + diphosphate + H(+). The catalysed reaction is tRNA(Sec) + L-serine + ATP = L-seryl-tRNA(Sec) + AMP + diphosphate + H(+). Its pathway is aminoacyl-tRNA biosynthesis; selenocysteinyl-tRNA(Sec) biosynthesis; L-seryl-tRNA(Sec) from L-serine and tRNA(Sec): step 1/1. Catalyzes the attachment of serine to tRNA(Ser). Is also able to aminoacylate tRNA(Sec) with serine, to form the misacylated tRNA L-seryl-tRNA(Sec), which will be further converted into selenocysteinyl-tRNA(Sec). This Alteromonas mediterranea (strain DSM 17117 / CIP 110805 / LMG 28347 / Deep ecotype) protein is Serine--tRNA ligase.